Here is an 80-residue protein sequence, read N- to C-terminus: Large ribosomal subunit protein bL31B (80 aa).

Belongs to the bacterial ribosomal protein bL31 family. Type B subfamily. Part of the 50S ribosomal subunit.

The sequence is that of Large ribosomal subunit protein bL31B from Xanthomonas axonopodis pv. citri (strain 306).